The following is a 464-amino-acid chain: ATP synthase subunit beta (464 aa).

153–160 (GGAGVGKT) provides a ligand contact to ATP.

Belongs to the ATPase alpha/beta chains family. F-type ATPases have 2 components, CF(1) - the catalytic core - and CF(0) - the membrane proton channel. CF(1) has five subunits: alpha(3), beta(3), gamma(1), delta(1), epsilon(1). CF(0) has three main subunits: a(1), b(2) and c(9-12). The alpha and beta chains form an alternating ring which encloses part of the gamma chain. CF(1) is attached to CF(0) by a central stalk formed by the gamma and epsilon chains, while a peripheral stalk is formed by the delta and b chains.

Its subcellular location is the cell inner membrane. The enzyme catalyses ATP + H2O + 4 H(+)(in) = ADP + phosphate + 5 H(+)(out). Its function is as follows. Produces ATP from ADP in the presence of a proton gradient across the membrane. The catalytic sites are hosted primarily by the beta subunits. This is ATP synthase subunit beta from Burkholderia vietnamiensis (strain G4 / LMG 22486) (Burkholderia cepacia (strain R1808)).